Here is a 633-residue protein sequence, read N- to C-terminus: Phospholipid--sterol O-acyltransferase (633 aa).

Residues 1-6 lie on the Cytoplasmic side of the membrane; sequence MGANSK. The helical; Signal-anchor for type II membrane protein transmembrane segment at 7-29 threads the bilayer; it reads SVTASFTVIAVFFLICGGRTAVE. The Lumenal segment spans residues 30–633; it reads DETEFHGDYS…TSANMLLQYI (604 aa). Ser195 serves as the catalytic Acyl-ester intermediate. Active-site charge relay system residues include Asp461 and His505.

Belongs to the AB hydrolase superfamily. Lipase family.

It is found in the microsome membrane. In terms of biological role, involved in lipid catabolism. Essential for sterol esters biosynthesis in leaves and seeds, but not in flowers. Plays a role in controlling the free sterol content of leaves. Catalyzes the transacylation of acyl groups from phospholipids to a variety of different sterols. Prefers phosphatidylethanolamine over phosphatidylcholine as an acyl donor. Not active toward neutral lipids. Highly specific for position sn-2, which in plant lipids is essentially devoid of saturated acyl groups. Broad sterol specificity (cholesterol &gt; campesterol &gt; sitosterol &gt; stigmasterol), but no activity with lupeol or beta-amyrin. The polypeptide is Phospholipid--sterol O-acyltransferase (PSAT) (Arabidopsis thaliana (Mouse-ear cress)).